A 444-amino-acid polypeptide reads, in one-letter code: Tol-Pal system protein TolB (444 aa).

Residues 1–19 form the signal peptide; the sequence is MRNIIYFILSLLFSVTSYA.

The protein belongs to the TolB family. The Tol-Pal system is composed of five core proteins: the inner membrane proteins TolA, TolQ and TolR, the periplasmic protein TolB and the outer membrane protein Pal. They form a network linking the inner and outer membranes and the peptidoglycan layer.

It localises to the periplasm. Functionally, part of the Tol-Pal system, which plays a role in outer membrane invagination during cell division and is important for maintaining outer membrane integrity. The sequence is that of Tol-Pal system protein TolB from Rickettsia rickettsii (strain Iowa).